Here is a 541-residue protein sequence, read N- to C-terminus: T-complex protein 1 subunit epsilon (541 aa).

A2 is subject to N-acetylalanine. K20 participates in a covalent cross-link: Glycyl lysine isopeptide (Lys-Gly) (interchain with G-Cter in SUMO2). The residue at position 26 (S26) is a Phosphoserine. G53 provides a ligand contact to ADP. G53 contributes to the ATP binding site. A Mg(2+)-binding site is contributed by D104. 4 residues coordinate ADP: G105, T106, T107, and S175. 2 residues coordinate ATP: T106 and T107. Residues K210, K214, K265, K275, and K279 each participate in a glycyl lysine isopeptide (Lys-Gly) (interchain with G-Cter in SUMO2) cross-link. The residue at position 346 (S346) is a Phosphoserine. K392 is covalently cross-linked (Glycyl lysine isopeptide (Lys-Gly) (interchain with G-Cter in SUMO2)). Positions 422, 492, 508, and 513 each coordinate ADP. G422 lines the ATP pocket. S539 carries the phosphoserine modification.

It belongs to the TCP-1 chaperonin family. In terms of assembly, component of the chaperonin-containing T-complex (TRiC), a hexadecamer composed of two identical back-to-back stacked rings enclosing a protein folding chamber. Each ring is made up of eight different subunits: TCP1/CCT1, CCT2, CCT3, CCT4, CCT5, CCT6A/CCT6, CCT7, CCT8. Interacts with PACRG. Interacts with DNAAF4. Interacts with DLEC1. Interacts with SPMAP2. In terms of processing, ubiquitinated by the DCX(DCAF12) complex specifically recognizes the diglutamate (Glu-Glu) at the C-terminus, leading to its degradation.

Its subcellular location is the cytoplasm. It localises to the cytoskeleton. The protein localises to the microtubule organizing center. The protein resides in the centrosome. The enzyme catalyses ATP + H2O = ADP + phosphate + H(+). Functionally, component of the chaperonin-containing T-complex (TRiC), a molecular chaperone complex that assists the folding of actin, tubulin and other proteins upon ATP hydrolysis. The TRiC complex mediates the folding of WRAP53/TCAB1, thereby regulating telomere maintenance. As part of the TRiC complex may play a role in the assembly of BBSome, a complex involved in ciliogenesis regulating transports vesicles to the cilia. The protein is T-complex protein 1 subunit epsilon (CCT5) of Homo sapiens (Human).